The sequence spans 42 residues: uncharacterized protein (42 aa).

Its subcellular location is the cytoplasm. This is an uncharacterized protein from Escherichia coli (strain K12).